The chain runs to 972 residues: 116 kDa U5 small nuclear ribonucleoprotein component (972 aa).

M1 bears the N-acetylmethionine mark. The interval 1–54 (MDTDLYDEFGNYIGPELDSDEDDDELGRETKDLDEMDDDDDDDDIGDHDDDHPG) is disordered. 2 stretches are compositionally biased toward acidic residues: residues 17-26 (LDSDEDDDEL) and 34-48 (DEMD…IGDH). The residue at position 19 (S19) is a Phosphoserine. Residue K64 forms a Glycyl lysine isopeptide (Lys-Gly) (interchain with G-Cter in SUMO1); alternate linkage. A Glycyl lysine isopeptide (Lys-Gly) (interchain with G-Cter in SUMO2); alternate cross-link involves residue K64. T86 carries the phosphothreonine modification. One can recognise a tr-type G domain in the interval 127–409 (ELIRNVTLCG…GIHLTKEELK (283 aa)). GTP contacts are provided by residues 136–143 (GHLHHGKT), 204–208 (DTPGH), and 258–261 (NKID).

Belongs to the TRAFAC class translation factor GTPase superfamily. Classic translation factor GTPase family. EF-G/EF-2 subfamily. Component of the U5 snRNP and the U4/U6-U5 tri-snRNP complex, a building block of the spliceosome. The U4/U6-U5 tri-snRNP complex is composed of the U4, U6 and U5 snRNAs and at least PRPF3, PRPF4, PRPF6, PRPF8, PRPF31, SNRNP200, TXNL4A, SNRNP40, DDX23, CD2BP2, PPIH, SNU13, EFTUD2, SART1 and USP39. Component of the pre-catalytic, catalytic and post-catalytic spliceosome complexes. Component of the minor spliceosome, which splices U12-type introns. Within this complex, interacts with CRIPT. Interacts with ERBB4 and PRPF8. Interacts with PIH1D1. Interacts with RPAP3 and URI1 in a ZNHIT2-dependent manner. Interacts with NRDE2. Interacts with FAM50A. Interacts with UBL5.

It localises to the nucleus. Required for pre-mRNA splicing as component of the spliceosome, including pre-catalytic, catalytic and post-catalytic spliceosomal complexes. Component of the U5 snRNP and the U4/U6-U5 tri-snRNP complex, a building block of the spliceosome. As a component of the minor spliceosome, involved in the splicing of U12-type introns in pre-mRNAs. The chain is 116 kDa U5 small nuclear ribonucleoprotein component (EFTUD2) from Pongo abelii (Sumatran orangutan).